The primary structure comprises 204 residues: Guanylate kinase (204 aa).

Positions 3–181 constitute a Guanylate kinase-like domain; the sequence is GTLIIITAPS…ALDDLVAVVR (179 aa). 10-17 lines the ATP pocket; that stretch reads APSGAGKT.

It belongs to the guanylate kinase family.

Its subcellular location is the cytoplasm. The enzyme catalyses GMP + ATP = GDP + ADP. Functionally, essential for recycling GMP and indirectly, cGMP. This chain is Guanylate kinase, found in Aromatoleum aromaticum (strain DSM 19018 / LMG 30748 / EbN1) (Azoarcus sp. (strain EbN1)).